Consider the following 392-residue polypeptide: Formate-dependent phosphoribosylglycinamide formyltransferase (392 aa).

N(1)-(5-phospho-beta-D-ribosyl)glycinamide contacts are provided by residues 22–23 (EL) and Glu-82. ATP is bound by residues Arg-114, Lys-155, 160–165 (SSGKGQ), 195–198 (EGVV), and Glu-203. The 190-residue stretch at 119–308 (RLAAEELQLP…EFALHVRAFL (190 aa)) folds into the ATP-grasp domain. Mg(2+)-binding residues include Glu-267 and Glu-279. N(1)-(5-phospho-beta-D-ribosyl)glycinamide-binding positions include Asp-286, Lys-355, and 362-363 (RR).

Belongs to the PurK/PurT family. In terms of assembly, homodimer.

The catalysed reaction is N(1)-(5-phospho-beta-D-ribosyl)glycinamide + formate + ATP = N(2)-formyl-N(1)-(5-phospho-beta-D-ribosyl)glycinamide + ADP + phosphate + H(+). It participates in purine metabolism; IMP biosynthesis via de novo pathway; N(2)-formyl-N(1)-(5-phospho-D-ribosyl)glycinamide from N(1)-(5-phospho-D-ribosyl)glycinamide (formate route): step 1/1. Its function is as follows. Involved in the de novo purine biosynthesis. Catalyzes the transfer of formate to 5-phospho-ribosyl-glycinamide (GAR), producing 5-phospho-ribosyl-N-formylglycinamide (FGAR). Formate is provided by PurU via hydrolysis of 10-formyl-tetrahydrofolate. The polypeptide is Formate-dependent phosphoribosylglycinamide formyltransferase (Shigella boydii serotype 4 (strain Sb227)).